The following is a 332-amino-acid chain: Anthranilate phosphoribosyltransferase (332 aa).

5-phospho-alpha-D-ribose 1-diphosphate contacts are provided by residues Gly-79, 82 to 83, Thr-87, 89 to 92, 107 to 115, and Ser-119; these read GD, NIST, and KHGNRSVSS. Gly-79 provides a ligand contact to anthranilate. Ser-91 provides a ligand contact to Mg(2+). Residue Asn-110 participates in anthranilate binding. Arg-165 serves as a coordination point for anthranilate. The Mg(2+) site is built by Asp-223 and Glu-224.

The protein belongs to the anthranilate phosphoribosyltransferase family. As to quaternary structure, homodimer. Requires Mg(2+) as cofactor.

The enzyme catalyses N-(5-phospho-beta-D-ribosyl)anthranilate + diphosphate = 5-phospho-alpha-D-ribose 1-diphosphate + anthranilate. It functions in the pathway amino-acid biosynthesis; L-tryptophan biosynthesis; L-tryptophan from chorismate: step 2/5. In terms of biological role, catalyzes the transfer of the phosphoribosyl group of 5-phosphorylribose-1-pyrophosphate (PRPP) to anthranilate to yield N-(5'-phosphoribosyl)-anthranilate (PRA). This chain is Anthranilate phosphoribosyltransferase, found in Vibrio vulnificus (strain YJ016).